The following is a 532-amino-acid chain: Light-independent protochlorophyllide reductase subunit B (532 aa).

D36 is a binding site for [4Fe-4S] cluster. D282 acts as the Proton donor in catalysis. 417–418 (GL) contributes to the substrate binding site.

Belongs to the ChlB/BchB/BchZ family. As to quaternary structure, protochlorophyllide reductase is composed of three subunits; BchL, BchN and BchB. Forms a heterotetramer of two BchB and two BchN subunits. Requires [4Fe-4S] cluster as cofactor.

The catalysed reaction is chlorophyllide a + oxidized 2[4Fe-4S]-[ferredoxin] + 2 ADP + 2 phosphate = protochlorophyllide a + reduced 2[4Fe-4S]-[ferredoxin] + 2 ATP + 2 H2O. It functions in the pathway porphyrin-containing compound metabolism; bacteriochlorophyll biosynthesis (light-independent). Component of the dark-operative protochlorophyllide reductase (DPOR) that uses Mg-ATP and reduced ferredoxin to reduce ring D of protochlorophyllide (Pchlide) to form chlorophyllide a (Chlide). This reaction is light-independent. The NB-protein (BchN-BchB) is the catalytic component of the complex. The chain is Light-independent protochlorophyllide reductase subunit B from Methylobacterium radiotolerans (strain ATCC 27329 / DSM 1819 / JCM 2831 / NBRC 15690 / NCIMB 10815 / 0-1).